Here is a 451-residue protein sequence, read N- to C-terminus: Probable DNA polymerase delta small subunit (451 aa).

Belongs to the DNA polymerase delta/II small subunit family. As to quaternary structure, heterodimer with subunits of 125 kDa and 50 kDa.

It localises to the nucleus. The catalysed reaction is DNA(n) + a 2'-deoxyribonucleoside 5'-triphosphate = DNA(n+1) + diphosphate. In terms of biological role, the function of the small subunit is not yet clear. This Caenorhabditis elegans protein is Probable DNA polymerase delta small subunit.